Reading from the N-terminus, the 467-residue chain is Siroheme synthase (467 aa).

The tract at residues M1 to M203 is precorrin-2 dehydrogenase /sirohydrochlorin ferrochelatase. Residues E22–I23 and P43–E44 contribute to the NAD(+) site. S128 carries the phosphoserine modification. Positions G216 to G467 are uroporphyrinogen-III C-methyltransferase. P225 is a binding site for S-adenosyl-L-methionine. D248 serves as the catalytic Proton acceptor. K270 functions as the Proton donor in the catalytic mechanism. Residues G301 to D303, I306, T331 to A332, M383, and G412 each bind S-adenosyl-L-methionine.

It in the N-terminal section; belongs to the precorrin-2 dehydrogenase / sirohydrochlorin ferrochelatase family. In the C-terminal section; belongs to the precorrin methyltransferase family.

The enzyme catalyses uroporphyrinogen III + 2 S-adenosyl-L-methionine = precorrin-2 + 2 S-adenosyl-L-homocysteine + H(+). It catalyses the reaction precorrin-2 + NAD(+) = sirohydrochlorin + NADH + 2 H(+). The catalysed reaction is siroheme + 2 H(+) = sirohydrochlorin + Fe(2+). The protein operates within cofactor biosynthesis; adenosylcobalamin biosynthesis; precorrin-2 from uroporphyrinogen III: step 1/1. Its pathway is cofactor biosynthesis; adenosylcobalamin biosynthesis; sirohydrochlorin from precorrin-2: step 1/1. It functions in the pathway porphyrin-containing compound metabolism; siroheme biosynthesis; precorrin-2 from uroporphyrinogen III: step 1/1. It participates in porphyrin-containing compound metabolism; siroheme biosynthesis; siroheme from sirohydrochlorin: step 1/1. The protein operates within porphyrin-containing compound metabolism; siroheme biosynthesis; sirohydrochlorin from precorrin-2: step 1/1. Multifunctional enzyme that catalyzes the SAM-dependent methylations of uroporphyrinogen III at position C-2 and C-7 to form precorrin-2 via precorrin-1. Then it catalyzes the NAD-dependent ring dehydrogenation of precorrin-2 to yield sirohydrochlorin. Finally, it catalyzes the ferrochelation of sirohydrochlorin to yield siroheme. The protein is Siroheme synthase of Methylobacillus flagellatus (strain ATCC 51484 / DSM 6875 / VKM B-1610 / KT).